The sequence spans 479 residues: Ribosomal RNA small subunit methyltransferase F (479 aa).

S-adenosyl-L-methionine-binding positions include 125-131 (AAAPGSK), Glu-149, Asp-176, and Asp-194. Cys-247 serves as the catalytic Nucleophile.

Belongs to the class I-like SAM-binding methyltransferase superfamily. RsmB/NOP family.

It is found in the cytoplasm. The enzyme catalyses cytidine(1407) in 16S rRNA + S-adenosyl-L-methionine = 5-methylcytidine(1407) in 16S rRNA + S-adenosyl-L-homocysteine + H(+). Its function is as follows. Specifically methylates the cytosine at position 1407 (m5C1407) of 16S rRNA. The sequence is that of Ribosomal RNA small subunit methyltransferase F from Escherichia coli O7:K1 (strain IAI39 / ExPEC).